The following is a 256-amino-acid chain: Small ribosomal subunit protein eS1A (256 aa).

N-acetylalanine; partial is present on Ala-2.

This sequence belongs to the eukaryotic ribosomal protein eS1 family. Component of the small ribosomal subunit. Mature ribosomes consist of a small (40S) and a large (60S) subunit. The 40S subunit contains about 33 different proteins and 1 molecule of RNA (18S). The 60S subunit contains about 49 different proteins and 3 molecules of RNA (25S, 5.8S and 5S).

The protein resides in the cytoplasm. The sequence is that of Small ribosomal subunit protein eS1A from Scheffersomyces stipitis (strain ATCC 58785 / CBS 6054 / NBRC 10063 / NRRL Y-11545) (Yeast).